The following is a 175-amino-acid chain: Avenin-like a3 (175 aa).

The signal sequence occupies residues 1 to 19 (MKTMFLLALLAFTATSAVA).

The protein belongs to the prolamin family. Contains 7 disulfide bonds.

In terms of biological role, seed storage protein. Not integrated in the gluten polymer through disulfide bonds, unless incorporated by reduction and reoxidation during dough making. Increases dough strength and bread volume, but decreases dough stability when added into a base wheat flour. This Triticum aestivum (Wheat) protein is Avenin-like a3.